Consider the following 379-residue polypeptide: Succinyl-diaminopimelate desuccinylase (379 aa).

A Zn(2+)-binding site is contributed by histidine 70. Residue aspartate 72 is part of the active site. Position 103 (aspartate 103) interacts with Zn(2+). Residue glutamate 137 is the Proton acceptor of the active site. 3 residues coordinate Zn(2+): glutamate 138, glutamate 166, and histidine 352.

This sequence belongs to the peptidase M20A family. DapE subfamily. In terms of assembly, homodimer. Requires Zn(2+) as cofactor. Co(2+) is required as a cofactor.

The enzyme catalyses N-succinyl-(2S,6S)-2,6-diaminopimelate + H2O = (2S,6S)-2,6-diaminopimelate + succinate. It participates in amino-acid biosynthesis; L-lysine biosynthesis via DAP pathway; LL-2,6-diaminopimelate from (S)-tetrahydrodipicolinate (succinylase route): step 3/3. In terms of biological role, catalyzes the hydrolysis of N-succinyl-L,L-diaminopimelic acid (SDAP), forming succinate and LL-2,6-diaminopimelate (DAP), an intermediate involved in the bacterial biosynthesis of lysine and meso-diaminopimelic acid, an essential component of bacterial cell walls. This chain is Succinyl-diaminopimelate desuccinylase, found in Burkholderia ambifaria (strain MC40-6).